We begin with the raw amino-acid sequence, 392 residues long: Bifunctional enzyme Fae/Hps (392 aa).

Residues 1 to 161 (MFQIGEALMG…EESNKSTHAI (161 aa)) form a formaldehyde-activating enzyme region. Histidine 17 (proton donor) is an active-site residue. Substrate contacts are provided by aspartate 19, leucine 48, lysine 66, threonine 68, and glutamine 83. The tract at residues 162 to 392 (MGFKVTRLWD…IDQFRVMTDF (231 aa)) is 3-hexulose-6-phosphate synthase.

It in the N-terminal section; belongs to the formaldehyde-activating enzyme family. This sequence in the C-terminal section; belongs to the HPS/KGPDC family. HPS subfamily.

The enzyme catalyses 5,6,7,8-tetrahydromethanopterin + formaldehyde = 5,10-methylenetetrahydromethanopterin + H2O. It catalyses the reaction D-ribulose 5-phosphate + formaldehyde = D-arabino-hex-3-ulose 6-phosphate. It functions in the pathway carbohydrate biosynthesis; D-ribose 5-phosphate biosynthesis. Its function is as follows. Catalyzes the condensation of formaldehyde with tetrahydromethanopterin (H(4)MPT) to 5,10-methylenetetrahydromethanopterin. Functionally, catalyzes the reversible formation of ribulose-5-phosphate and formaldehyde from 3-hexulose-6-phosphate. This Methanosarcina barkeri (strain Fusaro / DSM 804) protein is Bifunctional enzyme Fae/Hps.